A 179-amino-acid polypeptide reads, in one-letter code: Large ribosomal subunit protein uL5 (179 aa).

It belongs to the universal ribosomal protein uL5 family. As to quaternary structure, part of the 50S ribosomal subunit; part of the 5S rRNA/L5/L18/L25 subcomplex. Contacts the 5S rRNA and the P site tRNA. Forms a bridge to the 30S subunit in the 70S ribosome.

This is one of the proteins that bind and probably mediate the attachment of the 5S RNA into the large ribosomal subunit, where it forms part of the central protuberance. In the 70S ribosome it contacts protein S13 of the 30S subunit (bridge B1b), connecting the 2 subunits; this bridge is implicated in subunit movement. Contacts the P site tRNA; the 5S rRNA and some of its associated proteins might help stabilize positioning of ribosome-bound tRNAs. The polypeptide is Large ribosomal subunit protein uL5 (Dictyoglomus turgidum (strain DSM 6724 / Z-1310)).